A 31-amino-acid polypeptide reads, in one-letter code: Conotoxin Cltx-2 (31 aa).

2 positions are modified to 4-hydroxyproline: Pro6 and Pro31.

Post-translationally, contains 4 disulfide bonds. Expressed by the venom duct.

Its subcellular location is the secreted. The sequence is that of Conotoxin Cltx-2 from Californiconus californicus (California cone).